Here is a 414-residue protein sequence, read N- to C-terminus: MHYCVLSAFLLLHLVTVALSLSTCSTLDMDQFMRKRIEAIRGQILSKLKLTSPPEDYPEPEEVPPEVISIYNSTRDLLQEKASRRAAACERERSDEEYYAKEVYKIDMPSFLPSENAIPPTFYRPYFRIVRFDVSSMEKNASNLVKAEFRVFRLQNPKARVPEQRIELYQILKSKDLTSPTQRYIDSKVVKTRAEGEWLSFDVTDAVHEWLHHKDRNLGFKISLHCPCCTFVPSNNYIIPNKSEELEARFAGIDGTSTYTSGDQKTIKSTRKKNSGKSPHLLLMLLPSYRLESQQSNRRKKRALDAAYCFRNVQDNCCLRPLYIDFKRDLGWKWIHEPKGYNANFCAGACPYLWSSDTQHSRVLSLYNTINPEASASPCCVSQDLEPLTILYYIGKTPKIEQLSNMIVKSCKCS.

The first 20 residues, methionine 1–serine 20, serve as a signal peptide directing secretion. N-linked (GlcNAc...) asparagine glycans are attached at residues asparagine 72, asparagine 140, and asparagine 241. 4 cysteine pairs are disulfide-bonded: cysteine 309-cysteine 318, cysteine 317-cysteine 380, cysteine 346-cysteine 411, and cysteine 350-cysteine 413.

This sequence belongs to the TGF-beta family. In terms of assembly, interacts with the serine proteases, HTRA1 and HTRA3. Interacts with ASPN. Interacts with MFAP5. As to quaternary structure, interacts with Transforming growth factor beta-2 (TGF-beta-2) chain; interaction is non-covalent and maintains (TGF-beta-2) in a latent state. Interacts with LRRC32/GARP; leading to regulate activation of TGF-beta-2. Interacts with NREP; the interaction results in a decrease in TGFB2 autoinduction. Transforming growth factor beta-2: Homodimer; disulfide-linked. Transforming growth factor beta-2: Interacts with TGF-beta receptors (TGFBR1 and TGFBR2), leading to signal transduction. The precursor proprotein is cleaved in the Golgi apparatus to form Transforming growth factor beta-2 (TGF-beta-2) and Latency-associated peptide (LAP) chains, which remain non-covalently linked, rendering TGF-beta-2 inactive.

The protein resides in the secreted. It is found in the extracellular space. The protein localises to the extracellular matrix. Functionally, precursor of the Latency-associated peptide (LAP) and Transforming growth factor beta-2 (TGF-beta-2) chains, which constitute the regulatory and active subunit of TGF-beta-2, respectively. Its function is as follows. Required to maintain the Transforming growth factor beta-2 (TGF-beta-2) chain in a latent state during storage in extracellular matrix. Associates non-covalently with TGF-beta-2 and regulates its activation via interaction with 'milieu molecules', such as LTBP1 and LRRC32/GARP, that control activation of TGF-beta-2. Multifunctional protein that regulates various processes such as angiogenesis and heart development. Activation into mature form follows different steps: following cleavage of the proprotein in the Golgi apparatus, Latency-associated peptide (LAP) and Transforming growth factor beta-2 (TGF-beta-2) chains remain non-covalently linked rendering TGF-beta-2 inactive during storage in extracellular matrix. At the same time, LAP chain interacts with 'milieu molecules', such as LTBP1 and LRRC32/GARP, that control activation of TGF-beta-2 and maintain it in a latent state during storage in extracellular milieus. Once activated following release of LAP, TGF-beta-2 acts by binding to TGF-beta receptors (TGFBR1 and TGFBR2), which transduce signal. The protein is Transforming growth factor beta-2 proprotein (TGFB2) of Bos taurus (Bovine).